A 589-amino-acid chain; its full sequence is TAF5-like RNA polymerase II p300/CBP-associated factor-associated factor 65 kDa subunit 5L (589 aa).

WD repeat units lie at residues 266–305, 340–379, 382–421, 424–463, 466–505, and 508–547; these read NTEQ…LKSE, GHCG…NTVL, GHAY…PLRI, GHLA…SVRL, GHRG…LFKE, and GHTD…CNTP.

It belongs to the WD repeat TAF5 family. The PCAF complex is composed of a number of TBP-associated factors (TAFS), such as TAF5, TAF5L, TAF6, TAF6L, TAF9, TAF10 and TAF12, PCAF, and also PCAF-associated factors (PAFs), such as TADA2L/ADA2, TADA3L/ADA3 and SPT3. Component of the STAGA transcription coactivator-HAT complex, at least composed of SUPT3H, GCN5L2, TAF5L, TAF6L, SUPT7L, TADA3L, TAD1L, TAF10, TAF12, TRRAP and TAF9.

The protein localises to the nucleus. Its function is as follows. Functions as a component of the PCAF complex. The PCAF complex is capable of efficiently acetylating histones in a nucleosomal context. The PCAF complex could be considered as the human version of the yeast SAGA complex. With TAF6L, acts as an epigenetic regulator essential for somatic reprogramming. Regulates target genes through H3K9ac deposition and MYC recruitment which trigger MYC regulatory network to orchestrate gene expression programs to control embryonic stem cell state. The chain is TAF5-like RNA polymerase II p300/CBP-associated factor-associated factor 65 kDa subunit 5L from Mus musculus (Mouse).